The sequence spans 189 residues: Transmembrane protein 229b (189 aa).

At 1–17 the chain is on the cytoplasmic side; the sequence is MATTVTPEPLTALSRWY. The chain crosses the membrane as a helical span at residues 18 to 38; sequence LYAIHGYFCEVMFTAAWEFVV. Over 39–43 the chain is Extracellular; the sequence is NCNWK. Residues 44–64 traverse the membrane as a helical segment; that stretch reads FPGVTSVWALFIYGTCILIVE. The Cytoplasmic segment spans residues 65 to 75; it reads RMYLCLKDRCN. Residues 76-96 traverse the membrane as a helical segment; sequence VLLRCIIYTLWTYFWEFGTGF. The Extracellular portion of the chain corresponds to 97–114; sequence LLRQFNACPWDYSEFKYN. The chain crosses the membrane as a helical span at residues 115–135; sequence FMGLITAEYAVPWFCASFIVE. Residues 136 to 189 lie on the Cytoplasmic side of the membrane; that stretch reads RLVIRNTLRLRFDEVAESGQAEERLDRGGGGRGGRRGRGARAGATSANGYVKVD. Residues 158-189 form a disordered region; it reads ERLDRGGGGRGGRRGRGARAGATSANGYVKVD.

The protein belongs to the TMEM229 family.

The protein localises to the membrane. The sequence is that of Transmembrane protein 229b (tmem229b) from Danio rerio (Zebrafish).